Reading from the N-terminus, the 229-residue chain is MSIRRPQIPRLLLQNVSCMRNAQQILRHVNVSLHDGGALVLTGTNGSGKSTFLRMLAGFSKPSAGEILWNGHDITQSGIFQQYKLQLNWISLKDAIKERFTVLDNVQWFELLENKIGKAQPALELMGLGRLVKEKSRMLSMGQRKRLQLARLLAIDRPIWLLDEPSVALDDEGVRLLEYIIAEHRKKGGIVIVATHLPIDIEDAMILRLPPRFPRKMTLIDMLDRADIS.

One can recognise an ABC transporter domain in the interval 11–228 (LLLQNVSCMR…LIDMLDRADI (218 aa)). ATP is bound at residue 43 to 50 (GTNGSGKS).

This sequence belongs to the ABC transporter superfamily. ABCI family.

The protein localises to the membrane. The catalysed reaction is heme b(in) + ATP + H2O = heme b(out) + ADP + phosphate + H(+). Its function is as follows. Part of the ABC transporter complex CcmAB involved in the biogenesis of c-type cytochromes; once thought to export heme, this seems not to be the case, but its exact role is uncertain. Responsible for energy coupling to the transport system. This Arabidopsis thaliana (Mouse-ear cress) protein is ABC transporter I family member 1 (ABCI1).